Reading from the N-terminus, the 220-residue chain is MRLILLGAPGAGKGTQANFIKEKFGIPQISTGDMLRAAVKAGSPLGVEAKGYMDAGKLVPDALIIGLVKERLKDADCANGYLFDGFPRTIAQADAMKDAGVAIDYVLEIDVPFSEIVERMSGRRTHPASGRTYHVKFNPPKVEGKDDVTGEPLIQRDDDKEETVKKRLEVYEAQTKPLITYYGDWAQRGEENGLKAPQYRKISGLGTVDEIRERAFDALK.

ATP is bound at residue 10–15; the sequence is GAGKGT. Positions 30 to 59 are NMP; it reads STGDMLRAAVKAGSPLGVEAKGYMDAGKLV. AMP-binding positions include threonine 31, arginine 36, 57 to 59, 85 to 88, and glutamine 92; these read KLV and GFPR. Positions 122–159 are LID; that stretch reads GRRTHPASGRTYHVKFNPPKVEGKDDVTGEPLIQRDDD. Residues arginine 123 and 132–133 each bind ATP; that span reads TY. AMP is bound by residues arginine 156 and arginine 167. An ATP-binding site is contributed by glycine 206.

Belongs to the adenylate kinase family. Monomer.

Its subcellular location is the cytoplasm. It carries out the reaction AMP + ATP = 2 ADP. Its pathway is purine metabolism; AMP biosynthesis via salvage pathway; AMP from ADP: step 1/1. In terms of biological role, catalyzes the reversible transfer of the terminal phosphate group between ATP and AMP. Plays an important role in cellular energy homeostasis and in adenine nucleotide metabolism. This chain is Adenylate kinase, found in Burkholderia ambifaria (strain ATCC BAA-244 / DSM 16087 / CCUG 44356 / LMG 19182 / AMMD) (Burkholderia cepacia (strain AMMD)).